The primary structure comprises 283 residues: ATP synthase gamma chain (283 aa).

The protein belongs to the ATPase gamma chain family. As to quaternary structure, F-type ATPases have 2 components, CF(1) - the catalytic core - and CF(0) - the membrane proton channel. CF(1) has five subunits: alpha(3), beta(3), gamma(1), delta(1), epsilon(1). CF(0) has three main subunits: a, b and c.

The protein resides in the cell membrane. Produces ATP from ADP in the presence of a proton gradient across the membrane. The gamma chain is believed to be important in regulating ATPase activity and the flow of protons through the CF(0) complex. The sequence is that of ATP synthase gamma chain from Clostridium beijerinckii (strain ATCC 51743 / NCIMB 8052) (Clostridium acetobutylicum).